Reading from the N-terminus, the 398-residue chain is Cytochrome P450 165B3 (398 aa).

Residue C347 coordinates heme.

The protein belongs to the cytochrome P450 family. It depends on heme as a cofactor.

The protein operates within antibiotic biosynthesis; vancomycin biosynthesis. Functionally, involved in the coupling of aromatic side chains of the heptapeptide of vancomycin. This Amycolatopsis orientalis (Nocardia orientalis) protein is Cytochrome P450 165B3 (cyp165B3).